Reading from the N-terminus, the 323-residue chain is tRNA U34 carboxymethyltransferase (323 aa).

Carboxy-S-adenosyl-L-methionine contacts are provided by residues Lys-91, Trp-105, Lys-110, Gly-130, 181-182 (IE), Met-196, Tyr-200, and Arg-315.

The protein belongs to the class I-like SAM-binding methyltransferase superfamily. CmoB family. In terms of assembly, homotetramer.

It catalyses the reaction carboxy-S-adenosyl-L-methionine + 5-hydroxyuridine(34) in tRNA = 5-carboxymethoxyuridine(34) in tRNA + S-adenosyl-L-homocysteine + H(+). Functionally, catalyzes carboxymethyl transfer from carboxy-S-adenosyl-L-methionine (Cx-SAM) to 5-hydroxyuridine (ho5U) to form 5-carboxymethoxyuridine (cmo5U) at position 34 in tRNAs. This is tRNA U34 carboxymethyltransferase from Enterobacter sp. (strain 638).